Here is a 603-residue protein sequence, read N- to C-terminus: NADH-ubiquinone oxidoreductase chain 5 (603 aa).

The next 16 helical transmembrane spans lie at 4–24, 38–58, 89–109, 122–142, 171–191, 211–233, 241–261, 273–293, 301–320, 325–347, 366–386, 405–424, 457–477, 488–508, 537–557, and 582–602; these read FTTM…ATLI, TAIA…ICLG, FLPV…WYMA, LIFL…QLFI, AILY…WFLL, LPLL…HPWL, TPVS…FLLI, IQTL…ICAL, IVAF…IGIN, AFLH…GSII, MPLT…MPFL, NAWA…AYST, LMTG…PTSL, LAAL…NYLA, IPHL…DLTW, and GMIK…LLMI.

Belongs to the complex I subunit 5 family. As to quaternary structure, core subunit of respiratory chain NADH dehydrogenase (Complex I) which is composed of 45 different subunits.

The protein localises to the mitochondrion inner membrane. It carries out the reaction a ubiquinone + NADH + 5 H(+)(in) = a ubiquinol + NAD(+) + 4 H(+)(out). In terms of biological role, core subunit of the mitochondrial membrane respiratory chain NADH dehydrogenase (Complex I) which catalyzes electron transfer from NADH through the respiratory chain, using ubiquinone as an electron acceptor. Essential for the catalytic activity and assembly of complex I. The sequence is that of NADH-ubiquinone oxidoreductase chain 5 (MT-ND5) from Pongo pygmaeus (Bornean orangutan).